The sequence spans 68 residues: Toxin Cg2 (68 aa).

Residues 1-66 form the LCN-type CS-alpha/beta domain; it reads KDGYLVNKST…VYPIPGKTCS (66 aa). 4 cysteine pairs are disulfide-bonded: Cys12-Cys65, Cys16-Cys41, Cys25-Cys46, and Cys29-Cys48.

This sequence belongs to the long (4 C-C) scorpion toxin superfamily. Sodium channel inhibitor family. As to expression, expressed by the venom gland.

The protein localises to the secreted. Functionally, binds to sodium channels (Nav) and inhibits them. This chain is Toxin Cg2, found in Centruroides gracilis (Slenderbrown scorpion).